The chain runs to 497 residues: MSQPSARPSAVIVLAAGQGTRMKSTTPKIMHAIGGRSLVGHALAAAWSLAPEHLVAVVRHERARVAEHIETVAAQLGIDALAIADQDDVPGTGRAVELGLAALPADLEGTVVVTYGDVPLLTPETLARLVADHEADGNAVTVLTATLEDATGYGRIVRDAEGLVERIMEHKDALAHAESTGDDSFVAIREVNSGIYAFDAALLRRTLPAISTDNVQGEKYLTDVLGMARDEGGRVASVGTQDVWEVEGANDRRQLSDLGRRLNERVLRHWMKEGVTVVDPSSTWVDVTVTLSSDVTLKPGTQLHGATSVATGAVVGPDSTLTDTQVGERAVVKRTDATEAVIGADASIGPFTYLRPGTVLGEEGRIGAFYETKKVTIGRGAKLSHLGYAGDAEIGEYTNIGCGNITANYDGVNKHRTVIGAHVRTGSNTVFTAPVTVGDGAYTGAGAVVREDVPAGALALNAVSQRTLEGWVPAKRPGTSSAEAARAAGAEGSGAQG.

Positions 1-252 (MSQPSARPSA…VWEVEGANDR (252 aa)) are pyrophosphorylase. Residues 14–17 (LAAG), lysine 28, glutamine 86, 91–92 (GT), 115–117 (YGD), glycine 154, glutamate 169, asparagine 192, and asparagine 250 contribute to the UDP-N-acetyl-alpha-D-glucosamine site. Aspartate 117 is a Mg(2+) binding site. Asparagine 250 lines the Mg(2+) pocket. The interval 253-273 (RQLSDLGRRLNERVLRHWMKE) is linker. The segment at 274-497 (GVTVVDPSST…AGAEGSGAQG (224 aa)) is N-acetyltransferase. The UDP-N-acetyl-alpha-D-glucosamine site is built by arginine 355 and lysine 373. The Proton acceptor role is filled by histidine 385. The UDP-N-acetyl-alpha-D-glucosamine site is built by tyrosine 388 and asparagine 399. Acetyl-CoA contacts are provided by residues 408–409 (NY), serine 427, and alanine 445. The disordered stretch occupies residues 473–497 (PAKRPGTSSAEAARAAGAEGSGAQG). Low complexity predominate over residues 480-490 (SSAEAARAAGA).

In the N-terminal section; belongs to the N-acetylglucosamine-1-phosphate uridyltransferase family. This sequence in the C-terminal section; belongs to the transferase hexapeptide repeat family. As to quaternary structure, homotrimer. Mg(2+) serves as cofactor.

The protein localises to the cytoplasm. The catalysed reaction is alpha-D-glucosamine 1-phosphate + acetyl-CoA = N-acetyl-alpha-D-glucosamine 1-phosphate + CoA + H(+). It catalyses the reaction N-acetyl-alpha-D-glucosamine 1-phosphate + UTP + H(+) = UDP-N-acetyl-alpha-D-glucosamine + diphosphate. It functions in the pathway nucleotide-sugar biosynthesis; UDP-N-acetyl-alpha-D-glucosamine biosynthesis; N-acetyl-alpha-D-glucosamine 1-phosphate from alpha-D-glucosamine 6-phosphate (route II): step 2/2. The protein operates within nucleotide-sugar biosynthesis; UDP-N-acetyl-alpha-D-glucosamine biosynthesis; UDP-N-acetyl-alpha-D-glucosamine from N-acetyl-alpha-D-glucosamine 1-phosphate: step 1/1. Its pathway is bacterial outer membrane biogenesis; LPS lipid A biosynthesis. Functionally, catalyzes the last two sequential reactions in the de novo biosynthetic pathway for UDP-N-acetylglucosamine (UDP-GlcNAc). The C-terminal domain catalyzes the transfer of acetyl group from acetyl coenzyme A to glucosamine-1-phosphate (GlcN-1-P) to produce N-acetylglucosamine-1-phosphate (GlcNAc-1-P), which is converted into UDP-GlcNAc by the transfer of uridine 5-monophosphate (from uridine 5-triphosphate), a reaction catalyzed by the N-terminal domain. The polypeptide is Bifunctional protein GlmU (Micrococcus luteus (strain ATCC 4698 / DSM 20030 / JCM 1464 / CCM 169 / CCUG 5858 / IAM 1056 / NBRC 3333 / NCIMB 9278 / NCTC 2665 / VKM Ac-2230) (Micrococcus lysodeikticus)).